We begin with the raw amino-acid sequence, 266 residues long: Hydroxyethylthiazole kinase (266 aa).

A substrate-binding site is contributed by Met-39. ATP-binding residues include Lys-115 and Thr-160. Gly-187 is a substrate binding site.

It belongs to the Thz kinase family. Mg(2+) serves as cofactor.

It carries out the reaction 5-(2-hydroxyethyl)-4-methylthiazole + ATP = 4-methyl-5-(2-phosphooxyethyl)-thiazole + ADP + H(+). Its pathway is cofactor biosynthesis; thiamine diphosphate biosynthesis; 4-methyl-5-(2-phosphoethyl)-thiazole from 5-(2-hydroxyethyl)-4-methylthiazole: step 1/1. Catalyzes the phosphorylation of the hydroxyl group of 4-methyl-5-beta-hydroxyethylthiazole (THZ). The protein is Hydroxyethylthiazole kinase of Staphylococcus aureus (strain MSSA476).